A 167-amino-acid chain; its full sequence is Neutrophilic granule protein (167 aa).

A signal peptide spans 1–21 (MAGLWKTFVLVVALAVVSCEA). A disordered region spans residues 122 to 141 (EDTQETSFNDKQDVSEKEKF).

It belongs to the cathelicidin family. As to quaternary structure, monomer. Homodimer; disulfide-linked. In terms of tissue distribution, expressed in myeloid bone marrow cells. Expressed in neutrophilic precursors (at protein level). Expressed in myeloid bone marrow cells.

It localises to the secreted. Its subcellular location is the cytoplasmic granule. Its function is as follows. Acts as an inhibitor of cathepsin B (CTSB) activity. Plays a role as a negative regulator of tumor vascular development, cell invasion and metastasis. The protein is Neutrophilic granule protein of Mus musculus (Mouse).